The sequence spans 40 residues: uncharacterized protein (40 aa).

This is an uncharacterized protein from Escherichia coli (Bacteriophage T4).